The primary structure comprises 120 residues: Large ribosomal subunit protein uL18 (120 aa).

This sequence belongs to the universal ribosomal protein uL18 family. In terms of assembly, part of the 50S ribosomal subunit; part of the 5S rRNA/L5/L18/L25 subcomplex. Contacts the 5S and 23S rRNAs.

Its function is as follows. This is one of the proteins that bind and probably mediate the attachment of the 5S RNA into the large ribosomal subunit, where it forms part of the central protuberance. The protein is Large ribosomal subunit protein uL18 of Rhodopseudomonas palustris (strain BisA53).